The primary structure comprises 120 residues: NAD(P)H-quinone oxidoreductase subunit 3, chloroplastic (120 aa).

3 helical membrane-spanning segments follow: residues 10 to 30, 64 to 84, and 89 to 109; these read LWFF…ISEI, MFAL…PWAI, and LGIS…VGLV.

This sequence belongs to the complex I subunit 3 family. In terms of assembly, NDH is composed of at least 16 different subunits, 5 of which are encoded in the nucleus.

The protein resides in the plastid. It localises to the chloroplast thylakoid membrane. It catalyses the reaction a plastoquinone + NADH + (n+1) H(+)(in) = a plastoquinol + NAD(+) + n H(+)(out). It carries out the reaction a plastoquinone + NADPH + (n+1) H(+)(in) = a plastoquinol + NADP(+) + n H(+)(out). Functionally, NDH shuttles electrons from NAD(P)H:plastoquinone, via FMN and iron-sulfur (Fe-S) centers, to quinones in the photosynthetic chain and possibly in a chloroplast respiratory chain. The immediate electron acceptor for the enzyme in this species is believed to be plastoquinone. Couples the redox reaction to proton translocation, and thus conserves the redox energy in a proton gradient. The chain is NAD(P)H-quinone oxidoreductase subunit 3, chloroplastic from Chara vulgaris (Common stonewort).